The primary structure comprises 913 residues: Protein translocase subunit SecA (913 aa).

ATP contacts are provided by residues Gln87, 105-109, and Asp512; that span reads GEGKT. 4 residues coordinate Zn(2+): Cys897, Cys899, Cys908, and His909.

It belongs to the SecA family. In terms of assembly, monomer and homodimer. Part of the essential Sec protein translocation apparatus which comprises SecA, SecYEG and auxiliary proteins SecDF-YajC and YidC. Zn(2+) serves as cofactor.

It localises to the cell inner membrane. It is found in the cytoplasm. The enzyme catalyses ATP + H2O + cellular proteinSide 1 = ADP + phosphate + cellular proteinSide 2.. Part of the Sec protein translocase complex. Interacts with the SecYEG preprotein conducting channel. Has a central role in coupling the hydrolysis of ATP to the transfer of proteins into and across the cell membrane, serving both as a receptor for the preprotein-SecB complex and as an ATP-driven molecular motor driving the stepwise translocation of polypeptide chains across the membrane. The polypeptide is Protein translocase subunit SecA (Pseudomonas fluorescens (strain ATCC BAA-477 / NRRL B-23932 / Pf-5)).